The following is a 746-amino-acid chain: EF-hand domain-containing family member C2 (746 aa).

3 DM10 domains span residues 75–182 (DKQV…RKMG), 226–367 (DGHV…RTKY), and 429–536 (ESNT…EKHA). The region spanning 557–592 (PRSREIRQVFAAADPQHTKVIEYDPFRNLIVSITDG) is the EF-hand domain.

The protein resides in the cytoplasm. It is found in the cytoskeleton. It localises to the cilium axoneme. Microtubule inner protein (MIP) part of the dynein-decorated doublet microtubules (DMTs) in cilia axoneme, which is required for motile cilia beating. This is EF-hand domain-containing family member C2 (EFHC2) from Gallus gallus (Chicken).